Consider the following 628-residue polypeptide: Phosphomethylpyrimidine synthase (628 aa).

The interval methionine 1–glutamine 22 is disordered. A compositionally biased stretch (polar residues) spans threonine 7–glutamine 22. Residues asparagine 232, methionine 261, tyrosine 290, histidine 326, serine 346–glycine 348, aspartate 387–arginine 390, and glutamate 426 each bind substrate. Histidine 430 serves as a coordination point for Zn(2+). Substrate is bound at residue tyrosine 453. Histidine 494 is a Zn(2+) binding site. [4Fe-4S] cluster contacts are provided by cysteine 574, cysteine 577, and cysteine 582.

It belongs to the ThiC family. As to quaternary structure, homodimer. [4Fe-4S] cluster serves as cofactor.

It carries out the reaction 5-amino-1-(5-phospho-beta-D-ribosyl)imidazole + S-adenosyl-L-methionine = 4-amino-2-methyl-5-(phosphooxymethyl)pyrimidine + CO + 5'-deoxyadenosine + formate + L-methionine + 3 H(+). Its pathway is cofactor biosynthesis; thiamine diphosphate biosynthesis. In terms of biological role, catalyzes the synthesis of the hydroxymethylpyrimidine phosphate (HMP-P) moiety of thiamine from aminoimidazole ribotide (AIR) in a radical S-adenosyl-L-methionine (SAM)-dependent reaction. The sequence is that of Phosphomethylpyrimidine synthase from Pseudomonas putida (strain W619).